The sequence spans 426 residues: Inhibin beta A chain (426 aa).

An N-terminal signal peptide occupies residues 1–20; the sequence is MPLLWLRGFLLASCWIIVKS. The propeptide occupies 21–310; that stretch reads SPTPGSEGHS…EDHPHRRRRR (290 aa). A glycan (N-linked (GlcNAc...) asparagine) is linked at asparagine 165. Residues 177–186 show a composition bias toward polar residues; that stretch reads QQQKHPQGSS. Disordered regions lie at residues 177–201 and 260–291; these read QQQK…MEER and KKKK…SHRP. Over residues 263–275 the composition is skewed to basic and acidic residues; that stretch reads KEEEGEGKKKDGG. Cystine bridges form between cysteine 314–cysteine 322, cysteine 321–cysteine 391, cysteine 350–cysteine 423, and cysteine 354–cysteine 425.

Belongs to the TGF-beta family. As to quaternary structure, dimeric, linked by one or more disulfide bonds. Inhibin A is a dimer of alpha/INHA and beta-A/INHBA. Activin A is a homodimer of beta-A/INHBA. Activin AB is a dimer of beta-A/INHBA and beta-B/INHBB. Interacts with FST and FSTL3; these interactions prevent activin A interaction to its type II receptor. Activin A interacts with ACVR2A. Activin A interacts with BMPR2. Inhibin A interacts with ACVR1; this interaction creates a non-signaling complex (NSC) that inhibits ACVR1-mediated BMP signaling. Inhibin A interacts with ACVR2A.

The protein localises to the secreted. Inhibins/activins are involved in regulating a number of diverse functions such as hypothalamic and pituitary hormone secretion, gonadal hormone secretion, germ cell development and maturation, erythroid differentiation, insulin secretion, nerve cell survival, embryonic axial development or bone growth, depending on their subunit composition. Its function is as follows. Activin A is a homodimer of INHBA that plays a role in several essential biological processes including embryonic development, stem cell maintenance and differentiation, haematopoiesis, cell proliferation and tissue fibrosis. Signals through type I (such as ACVR1B or ACVR1C) and type II receptors (such as ACVR2A, ACVR2B or BMPR2) which, upon ligand binding, phosphorylate SMAD2 and SMAD3 intracellular signaling mediators that form a complex with SMAD4, translocate to the nucleus and modulate gene expression. Can also activate alternative non-canonical intracellular signaling pathways including the p38 MAPK, extracellular signal-regulated kinases 1/2 (ERK1/2) and c-Jun N-terminal kinases (JNKs) to modulate cell migration and differentiation. Alternatively, promotes osteoblastic differentiation via ACVRL1-SMAD1/5/9 pathway. In addition, can engage the type I receptor ACVR1 to form an ACVR1-activin A-type II receptor non-signaling complex (NSC) that renders receptors unavailable for engagement with BMPs, hence resulting in an apparent inhibition of ACVR1-mediated BMP signaling. Functionally, inhibin A is a dimer of alpha/INHA and beta-A/INHBA that functions as a feedback regulator in the hypothalamic-pituitary-gonadal (HPG) axis. Inhibits the secretion of FSH from the anterior pituitary gland by acting on pituitary gonadotrope cells. Antagonizes activin A by binding to the proteoglycan, betaglycan, and forming a stable complex with and, thereby, sequestering type II activin receptors while excluding type I receptor. The sequence is that of Inhibin beta A chain (INHBA) from Equus caballus (Horse).